A 339-amino-acid chain; its full sequence is Diacylglycerol acyltransferase/mycolyltransferase Ag85A (339 aa).

The N-terminal stretch at M1–A43 is a signal peptide. M85–R86 provides a ligand contact to substrate. The fibronectin-binding stretch occupies residues F101 to V111. C130 and C135 are disulfide-bonded. 2 residues coordinate substrate: S169 and D197. S169 functions as the Nucleophile in the catalytic mechanism. Residue E272 is part of the active site. Substrate is bound by residues F274 to T277, K281, and H304 to W306. H304 is a catalytic residue.

It belongs to the mycobacterial A85 antigen family. As to quaternary structure, homodimer.

Its subcellular location is the secreted. It localises to the cell wall. It is found in the cytoplasm. The enzyme catalyses an acyl-CoA + a 1,2-diacyl-sn-glycerol = a triacyl-sn-glycerol + CoA. It catalyses the reaction 2 alpha,alpha'-trehalose 6-mycolate = alpha,alpha'-trehalose 6,6'-bismycolate + alpha,alpha-trehalose. Functionally, the antigen 85 proteins (FbpA, FbpB, FbpC) are responsible for the high affinity of mycobacteria for fibronectin, a large adhesive glycoprotein, which facilitates the attachment of M.tuberculosis to murine alveolar macrophages (AMs). They also help to maintain the integrity of the cell wall by catalyzing the transfer of mycolic acids to cell wall arabinogalactan, and through the synthesis of alpha,alpha-trehalose dimycolate (TDM, cord factor). They catalyze the transfer of a mycoloyl residue from one molecule of alpha,alpha-trehalose monomycolate (TMM) to another TMM, leading to the formation of TDM. FbpA mediates triacylglycerol (TAG) formation with long-chain acyl-CoA as the acyl donor and 1,2-dipalmitoyl-sn-glycerol (1,2-dipalmitin) as the acyl acceptor. It has a preference for C26:0-CoA over C18:1-CoA. This Mycobacterium gordonae protein is Diacylglycerol acyltransferase/mycolyltransferase Ag85A (fbpA).